The sequence spans 357 residues: Peptide chain release factor 1 (357 aa).

Gln234 is subject to N5-methylglutamine.

Belongs to the prokaryotic/mitochondrial release factor family. Post-translationally, methylated by PrmC. Methylation increases the termination efficiency of RF1.

The protein resides in the cytoplasm. In terms of biological role, peptide chain release factor 1 directs the termination of translation in response to the peptide chain termination codons UAG and UAA. This is Peptide chain release factor 1 from Nocardioides sp. (strain ATCC BAA-499 / JS614).